The sequence spans 170 residues: ATP synthase subunit b (170 aa).

Residues Phe-15–Pro-37 form a helical membrane-spanning segment. The disordered stretch occupies residues Ala-72 to Arg-98.

Belongs to the ATPase B chain family. F-type ATPases have 2 components, F(1) - the catalytic core - and F(0) - the membrane proton channel. F(1) has five subunits: alpha(3), beta(3), gamma(1), delta(1), epsilon(1). F(0) has four main subunits: a(1), b(1), b'(1) and c(10-14). The alpha and beta chains form an alternating ring which encloses part of the gamma chain. F(1) is attached to F(0) by a central stalk formed by the gamma and epsilon chains, while a peripheral stalk is formed by the delta, b and b' chains.

It localises to the cellular thylakoid membrane. F(1)F(0) ATP synthase produces ATP from ADP in the presence of a proton or sodium gradient. F-type ATPases consist of two structural domains, F(1) containing the extramembraneous catalytic core and F(0) containing the membrane proton channel, linked together by a central stalk and a peripheral stalk. During catalysis, ATP synthesis in the catalytic domain of F(1) is coupled via a rotary mechanism of the central stalk subunits to proton translocation. In terms of biological role, component of the F(0) channel, it forms part of the peripheral stalk, linking F(1) to F(0). In Prochlorococcus marinus (strain MIT 9215), this protein is ATP synthase subunit b.